The following is a 722-amino-acid chain: Ataxin-7-like protein 2 (722 aa).

Disordered stretches follow at residues 106–228 (LSKL…PPKT), 288–317 (NSRKGESPKEKSPGRKEQVLERPSQELPSS), 347–403 (SRAS…DCHY), and 531–600 (AITS…GCRG). Residues 181–191 (GKPPMAPPSKE) show a composition bias toward pro residues. One can recognise an SCA7 domain in the interval 230-297 (RKMARKECDL…NSRKGESPKE (68 aa)). Basic and acidic residues predominate over residues 290–311 (RKGESPKEKSPGRKEQVLERPS). The span at 541-556 (PSPSFSKLPPSKASKS) shows a compositional bias: low complexity. Residues 558-569 (KGKDGVEVEAPS) are compositionally biased toward basic and acidic residues. Ser-575 carries the post-translational modification Phosphoserine.

This chain is Ataxin-7-like protein 2 (ATXN7L2), found in Homo sapiens (Human).